The following is a 469-amino-acid chain: Trehalose-6-phosphate synthase (469 aa).

Arg-10 serves as a coordination point for D-glucose 6-phosphate. 22-23 (GG) provides a ligand contact to UDP-alpha-D-glucose. D-glucose 6-phosphate is bound by residues Tyr-77 and Asp-131. Arg-262 and Lys-267 together coordinate UDP-alpha-D-glucose. Arg-300 contributes to the D-glucose 6-phosphate binding site. Residue 365-369 (LVAKE) participates in UDP-alpha-D-glucose binding.

Belongs to the glycosyltransferase 20 family. In terms of assembly, homotetramer.

The catalysed reaction is D-glucose 6-phosphate + UDP-alpha-D-glucose = alpha,alpha-trehalose 6-phosphate + UDP + H(+). Its pathway is glycan biosynthesis; trehalose biosynthesis. Its function is as follows. Probably involved in the osmoprotection via the biosynthesis of trehalose. Catalyzes the transfer of glucose from UDP-alpha-D-glucose (UDP-Glc) to D-glucose 6-phosphate (Glc-6-P) to form trehalose-6-phosphate. Acts with retention of the anomeric configuration of the UDP-sugar donor. The protein is Trehalose-6-phosphate synthase of Sodalis glossinidius (strain morsitans).